The sequence spans 623 residues: MSTENKQSLPAITLAAIGVVYGDIGTSPLYTLRECLSGQFGFGVERDAVFGFLSLIFWLLVFVVSFKYLTFVMRADNAGEGGILTLMSLAGRNTSARMTSVLVILGLIGGSFFYGEVVITPAISVMSAIEGLEIAAPSLDPYIVPLSIVVLTLLFMIQKHGTGMVGKLFAPIMLAWFLVLAVLGARSILNNPEVLQALNPVWAVHFFLEYKAVSFAALGAVVLSITGVEALYADMGHFGKLPIRVAWFSVVLPSLVLNYFGQGALLLKTPEAIKNPFFLLAPDWALIPMLILATLATVIASQAVISGVFSLTRQAVRLGYLSPMRIIHTSEMESGQIYIPVVNWLLYFAVVIVIVSFEHSSNLAAAYGIAVTGTMVLTSILFATAARKNWHWSRILVGLMVVAFLCVDVPLFSANLEKLFSGGWLPLSLGLVMFIIMTTWKSERFRLLRRMHEHGNSLDAMITSLEKSPPVRVPGTAVYMSRALNVIPFALLHNLKHNKVLHERVILLTLRTEDAPYVHNVKRVTLEQLSPTFWRVVASYGWRETPNVEEIFHRCGLEGLSCRMMETSFFMSHESLIIGDKRPWYLRLRGKLFLLLQRNALRAPDQFEIPPNRVIELGTQVEI.

The next 12 helical transmembrane spans lie at 9–29 (LPAITLAAIGVVYGDIGTSPL), 49–69 (VFGFLSLIFWLLVFVVSFKYL), 101–121 (VLVILGLIGGSFFYGEVVITP), 137–157 (PSLDPYIVPLSIVVLTLLFMI), 163–183 (GMVGKLFAPIMLAWFLVLAVL), 212–232 (AVSFAALGAVVLSITGVEALY), 247–267 (WFSVVLPSLVLNYFGQGALLL), 276–296 (PFFLLAPDWALIPMLILATLA), 337–357 (IYIPVVNWLLYFAVVIVIVSF), 363–383 (LAAAYGIAVTGTMVLTSILFA), 395–415 (ILVGLMVVAFLCVDVPLFSAN), and 419–439 (LFSGGWLPLSLGLVMFIIMTT).

The protein belongs to the HAK/KUP transporter (TC 2.A.72) family.

It is found in the cell inner membrane. It carries out the reaction K(+)(in) + H(+)(in) = K(+)(out) + H(+)(out). Functionally, responsible for the low-affinity transport of potassium into the cell. Likely operates as a K(+):H(+) symporter. The protein is Low affinity potassium transport system protein Kup of Cronobacter sakazakii (strain ATCC BAA-894) (Enterobacter sakazakii).